We begin with the raw amino-acid sequence, 330 residues long: Aspartate--ammonia ligase (330 aa).

It belongs to the class-II aminoacyl-tRNA synthetase family. AsnA subfamily.

The protein localises to the cytoplasm. It carries out the reaction L-aspartate + NH4(+) + ATP = L-asparagine + AMP + diphosphate + H(+). It functions in the pathway amino-acid biosynthesis; L-asparagine biosynthesis; L-asparagine from L-aspartate (ammonia route): step 1/1. This Streptococcus uberis (strain ATCC BAA-854 / 0140J) protein is Aspartate--ammonia ligase.